Consider the following 404-residue polypeptide: Cysteine desulfurase IscS (404 aa).

Pyridoxal 5'-phosphate contacts are provided by residues Ala-75–Thr-76, Asn-155, Gln-183, and Ser-203–His-205. Position 206 is an N6-(pyridoxal phosphate)lysine (Lys-206). Thr-243 serves as a coordination point for pyridoxal 5'-phosphate. Cys-328 (cysteine persulfide intermediate) is an active-site residue. Cys-328 provides a ligand contact to [2Fe-2S] cluster.

Belongs to the class-V pyridoxal-phosphate-dependent aminotransferase family. NifS/IscS subfamily. In terms of assembly, homodimer. Forms a heterotetramer with IscU, interacts with other sulfur acceptors. It depends on pyridoxal 5'-phosphate as a cofactor.

The protein localises to the cytoplasm. The catalysed reaction is (sulfur carrier)-H + L-cysteine = (sulfur carrier)-SH + L-alanine. The protein operates within cofactor biosynthesis; iron-sulfur cluster biosynthesis. In terms of biological role, master enzyme that delivers sulfur to a number of partners involved in Fe-S cluster assembly, tRNA modification or cofactor biosynthesis. Catalyzes the removal of elemental sulfur atoms from cysteine to produce alanine. Functions as a sulfur delivery protein for Fe-S cluster synthesis onto IscU, an Fe-S scaffold assembly protein, as well as other S acceptor proteins. This is Cysteine desulfurase IscS from Klebsiella pneumoniae (strain 342).